We begin with the raw amino-acid sequence, 909 residues long: Protein translocase subunit SecA (909 aa).

ATP contacts are provided by residues Gln87, 105-109 (GEGKT), and Asp507. Residues 834–909 (EAVEEQRRRQ…KYKQCCGKLS (76 aa)) are disordered. The span at 837 to 848 (EEQRRRQGDMQY) shows a compositional bias: basic and acidic residues. The span at 859-871 (QGAGGEGAAGGTA) shows a compositional bias: gly residues. The Zn(2+) site is built by Cys893, Cys895, Cys904, and Cys905.

Belongs to the SecA family. Monomer and homodimer. Part of the essential Sec protein translocation apparatus which comprises SecA, SecYEG and auxiliary proteins SecDF-YajC and YidC. Requires Zn(2+) as cofactor.

The protein resides in the cell inner membrane. Its subcellular location is the cytoplasm. It catalyses the reaction ATP + H2O + cellular proteinSide 1 = ADP + phosphate + cellular proteinSide 2.. Its function is as follows. Part of the Sec protein translocase complex. Interacts with the SecYEG preprotein conducting channel. Has a central role in coupling the hydrolysis of ATP to the transfer of proteins into and across the cell membrane, serving both as a receptor for the preprotein-SecB complex and as an ATP-driven molecular motor driving the stepwise translocation of polypeptide chains across the membrane. This Alkalilimnicola ehrlichii (strain ATCC BAA-1101 / DSM 17681 / MLHE-1) protein is Protein translocase subunit SecA.